The primary structure comprises 339 residues: UPF0324 membrane protein spyM18_1033 (339 aa).

9 consecutive transmembrane segments (helical) span residues 7 to 24 (KLPG…AWYL), 28 to 50 (FPII…FYGH), 57 to 79 (GISF…GLNL), 84 to 106 (AVGM…VAYG), 118 to 140 (ATLV…APVI), 150 to 172 (AISV…GQLL), 256 to 275 (FILF…SFGV), 290 to 307 (FIVM…LVKL), and 314 to 336 (AILL…QLSL).

The protein belongs to the UPF0324 family.

The protein resides in the cell membrane. The polypeptide is UPF0324 membrane protein spyM18_1033 (Streptococcus pyogenes serotype M18 (strain MGAS8232)).